The following is a 179-amino-acid chain: IMPACT family member in pol 5'region (179 aa).

The protein belongs to the IMPACT family.

In Thermus thermophilus, this protein is IMPACT family member in pol 5'region.